Here is a 106-residue protein sequence, read N- to C-terminus: Iron-sulfur cluster assembly protein CyaY (106 aa).

The protein belongs to the frataxin family. As to quaternary structure, interacts with IscS. Certain pairs of proteins can bind simultaneously to IscS; IscS-IscU-CyaY complexes can be isolated in vitro, but (IscS-TusA-CyaY) complexes cannot.

Functionally, involved in iron-sulfur (Fe-S) cluster assembly. May act as a regulator of Fe-S biogenesis. This Escherichia coli O157:H7 protein is Iron-sulfur cluster assembly protein CyaY.